Reading from the N-terminus, the 79-residue chain is RNA-binding protein Hfq (79 aa).

Residues aspartate 10–valine 69 form the Sm domain.

It belongs to the Hfq family. As to quaternary structure, homohexamer.

Its function is as follows. RNA chaperone that binds small regulatory RNA (sRNAs) and mRNAs to facilitate mRNA translational regulation in response to envelope stress, environmental stress and changes in metabolite concentrations. Also binds with high specificity to tRNAs. In Cupriavidus metallidurans (strain ATCC 43123 / DSM 2839 / NBRC 102507 / CH34) (Ralstonia metallidurans), this protein is RNA-binding protein Hfq.